The following is a 198-amino-acid chain: Penicillin-binding protein activator LpoB (198 aa).

The N-terminal stretch at 1 to 20 is a signal peptide; sequence MSWIRIRRSGVLLLALVLSG. The N-palmitoyl cysteine moiety is linked to residue Cys-21. Residue Cys-21 is the site of S-diacylglycerol cysteine attachment. The tract at residues 28–62 is disordered; sequence PQPAAPVEPVTPPVNVPQPPKAEPGQNVPPPPKMQ. Residues 30 to 61 are compositionally biased toward pro residues; the sequence is PAAPVEPVTPPVNVPQPPKAEPGQNVPPPPKM.

Belongs to the LpoB family. Interacts with PBP1b.

It localises to the cell outer membrane. In terms of biological role, regulator of peptidoglycan synthesis that is essential for the function of penicillin-binding protein 1B (PBP1b). In Erwinia amylovora (strain CFBP1430), this protein is Penicillin-binding protein activator LpoB.